A 253-amino-acid polypeptide reads, in one-letter code: Triosephosphate isomerase (253 aa).

Residue 9 to 11 (NWK) coordinates substrate. His-97 functions as the Electrophile in the catalytic mechanism. Catalysis depends on Glu-169, which acts as the Proton acceptor. Substrate-binding positions include Gly-175, Ser-215, and 236–237 (GG).

This sequence belongs to the triosephosphate isomerase family. Homodimer.

The protein localises to the cytoplasm. It catalyses the reaction D-glyceraldehyde 3-phosphate = dihydroxyacetone phosphate. It participates in carbohydrate biosynthesis; gluconeogenesis. The protein operates within carbohydrate degradation; glycolysis; D-glyceraldehyde 3-phosphate from glycerone phosphate: step 1/1. Functionally, involved in the gluconeogenesis. Catalyzes stereospecifically the conversion of dihydroxyacetone phosphate (DHAP) to D-glyceraldehyde-3-phosphate (G3P). This chain is Triosephosphate isomerase, found in Staphylococcus haemolyticus (strain JCSC1435).